Here is a 233-residue protein sequence, read N- to C-terminus: Large ribosomal subunit protein uL1 (233 aa).

The protein belongs to the universal ribosomal protein uL1 family. In terms of assembly, part of the 50S ribosomal subunit.

Its function is as follows. Binds directly to 23S rRNA. Forms the L1 stalk. Unlike the case in the Thermus thermophilus 70S ribosome, this protein is not seen to block the exit path of the E site tRNA. It is clear that the protein in the structure is flexible however, so this is probably due to its position in these crystals. Protein L1 is also a translational repressor protein, it controls the translation of the L11 operon by binding to its mRNA. In Deinococcus radiodurans (strain ATCC 13939 / DSM 20539 / JCM 16871 / CCUG 27074 / LMG 4051 / NBRC 15346 / NCIMB 9279 / VKM B-1422 / R1), this protein is Large ribosomal subunit protein uL1 (rplA).